Here is an 83-residue protein sequence, read N- to C-terminus: Major outer membrane lipoprotein (83 aa).

Positions 1-19 (MNNVLKFSALALAAVLATG) are cleaved as a signal peptide. A lipid anchor (N-palmitoyl cysteine) is attached at Cys20. A lipid anchor (S-diacylglycerol cysteine) is attached at Cys20.

The protein localises to the cell outer membrane. The polypeptide is Major outer membrane lipoprotein (oprI) (Pseudomonas aeruginosa (strain ATCC 15692 / DSM 22644 / CIP 104116 / JCM 14847 / LMG 12228 / 1C / PRS 101 / PAO1)).